Here is a 309-residue protein sequence, read N- to C-terminus: MRKIIVGSRKSKLALTQTNWFIDQLKALGLPYEFEVKEIVTKGDVILDVTLSKVGGKGLFVKEIEHALLTKEIDMAVHSMKDMPAVLPEGLMIGCTPKRVDPRDAFISKSGASFKELAEGAILGTSSLRRSAQLLAARPDLQVKWIRGNIDTRLRKLKEEDYDAIILATAGLQRMGWDDEVITEHLDETLCVPAVGQGALAIECREDDKDLLQLLAHINDAVTERTVAAERVFLHKLEGGCQVPIAGYATLTENDAIELTALVGSMDGSILLKETVVGTDPEKVGLEAADRLIKQGAKELILAANKGQQ.

At Cys241 the chain carries S-(dipyrrolylmethanemethyl)cysteine.

The protein belongs to the HMBS family. In terms of assembly, monomer. Requires dipyrromethane as cofactor.

The catalysed reaction is 4 porphobilinogen + H2O = hydroxymethylbilane + 4 NH4(+). It functions in the pathway porphyrin-containing compound metabolism; protoporphyrin-IX biosynthesis; coproporphyrinogen-III from 5-aminolevulinate: step 2/4. Tetrapolymerization of the monopyrrole PBG into the hydroxymethylbilane pre-uroporphyrinogen in several discrete steps. The sequence is that of Porphobilinogen deaminase from Bacillus thuringiensis subsp. konkukian (strain 97-27).